Consider the following 206-residue polypeptide: Large ribosomal subunit protein uL4 (206 aa).

Residues 45–85 (QGNRAQKDREQVKHTTKKPWRQKGTGRARAGMSSSPLWRGG) are disordered. Residues 58–70 (HTTKKPWRQKGTG) are compositionally biased toward basic residues.

This sequence belongs to the universal ribosomal protein uL4 family. In terms of assembly, part of the 50S ribosomal subunit.

Its function is as follows. One of the primary rRNA binding proteins, this protein initially binds near the 5'-end of the 23S rRNA. It is important during the early stages of 50S assembly. It makes multiple contacts with different domains of the 23S rRNA in the assembled 50S subunit and ribosome. In terms of biological role, forms part of the polypeptide exit tunnel. This chain is Large ribosomal subunit protein uL4, found in Burkholderia mallei (strain NCTC 10247).